The following is a 163-amino-acid chain: MDYTLTREESKLLMELLGLPMEQYGNFPLMRKAFLQKCKIMHPDKGGDEQTAKMLISLYKKLESEVKSLNTDDGFSTEEVCKISKLTYIKDWLTCSFGSFSCKCLFCLLLKSHKQELTKKPKVWGDCLCFKCYTLWFGLQYTVDIYQSWQALIGVTLFKNLNI.

An N-acetylmethionine; by host modification is found at M1. The J domain maps to 12-76; the sequence is LLMELLGLPM…KSLNTDDGFS (65 aa). The C4-type; atypical zinc finger occupies 95 to 107; the sequence is CSFGSFSCKCLFC. An H1C3-type; atypical zinc finger spans residues 113-132; that stretch reads HKQELTKKPKVWGDCLCFKC.

As to quaternary structure, interacts with host PPP2R1A; the interaction inhibits PP2A activity.

It localises to the host cytoplasm. It is found in the host nucleus. Its function is as follows. Promotes efficient viral genome replication by accelerating both G1 and S phase progression of the cell cycle. Inhibits host PP2A by binding to the A subunit, thereby displacing lower affinity regulatory B subunit. Inactivation of PP2A in turn results in the transactivation of cyclin A and cyclin D1 promoters. Late during the infection cycle, ST may induce dephosphorylation of host MTOR, leading to the inhibition of cap-dependent translation. May establish and maintain high levels of viral genomes during persistent infection in cell culture. This Saimiri boliviensis boliviensis (Bolivian squirrel monkey) protein is Small t antigen.